Reading from the N-terminus, the 101-residue chain is Ubiquitin-related modifier 1 (101 aa).

Position 101 is a 1-thioglycine (glycine 101). A Glycyl lysine isopeptide (Gly-Lys) (interchain with K-? in acceptor proteins) cross-link involves residue glycine 101.

This sequence belongs to the URM1 family. In terms of assembly, component of a complex at least composed of URM1, CTU2/NCS2 and CTU1/ATPBD3. In terms of processing, C-terminal thiocarboxylation occurs in 2 steps, it is first acyl-adenylated (-COAMP) via the hesA/moeB/thiF part of MOCS3, then thiocarboxylated (-COSH) via the rhodanese domain of MOCS3.

It localises to the cytoplasm. The protein operates within tRNA modification; 5-methoxycarbonylmethyl-2-thiouridine-tRNA biosynthesis. In terms of biological role, acts as a sulfur carrier required for 2-thiolation of mcm(5)S(2)U at tRNA wobble positions of cytosolic tRNA(Lys), tRNA(Glu) and tRNA(Gln). Serves as sulfur donor in tRNA 2-thiolation reaction by being thiocarboxylated (-COSH) at its C-terminus by MOCS3. The sulfur is then transferred to tRNA to form 2-thiolation of mcm(5)S(2)U. Also acts as a ubiquitin-like protein (UBL) that is covalently conjugated via an isopeptide bond to lysine residues of target proteins such as MOCS3, ATPBD3, CTU2, USP15 and CAS. The thiocarboxylated form serves as substrate for conjugation and oxidative stress specifically induces the formation of UBL-protein conjugates. The protein is Ubiquitin-related modifier 1 of Bos taurus (Bovine).